A 416-amino-acid chain; its full sequence is Tumor necrosis factor receptor superfamily member 19 (416 aa).

The N-terminal stretch at 1 to 29 (MALKVLPLHRTVLFAAILFLLHLACKVSC) is a signal peptide. Residues 30-170 (ETGDCRQQEF…TVSSPRDTAL (141 aa)) lie on the Extracellular side of the membrane. TNFR-Cys repeat units lie at residues 33–72 (DCRQ…DAQC) and 74–114 (PCRP…DAVC). 8 cysteine pairs are disulfide-bonded: Cys34–Cys46, Cys49–Cys62, Cys52–Cys72, Cys75–Cys89, Cys92–Cys106, Cys95–Cys114, Cys117–Cys135, and Cys138–Cys149. N-linked (GlcNAc...) asparagine glycosylation occurs at Asn105. A TNFR-Cys 3; truncated repeat occupies 116–149 (DCLPGFYRKTKLVGFQDMECVPCGDPPPPYEPHC). Residues 171–191 (AAVICSALATVLLALLILCVI) form a helical membrane-spanning segment. At 192-416 (YCKRQFMEKK…LAMPTAFQDA (225 aa)) the chain is on the cytoplasmic side. A disordered region spans residues 321 to 416 (LCDSYPELTG…LAMPTAFQDA (96 aa)). Polar residues-rich tracts occupy residues 331 to 351 (EDTN…SSGG), 360 to 370 (LESSGNVSEST), and 381 to 396 (VWEQ…TPSQ).

Associates with TRAF1, TRAF2, TRAF3 and TRAF5. Interacts with LINGO1. As to expression, highly expressed in adult brain, and in embryos from day 11-17, but not earlier. Detected in embryonic brain and epithelium, and at lower levels in adult heart, lung and liver. In neonatal mice, mainly in hair follicles and neuron-like cells in the cerebellum, but not in the skin epidermis. Isoform 3 was found in embryonic day 17.5 skin but not in brain and liver.

Its subcellular location is the cell membrane. The protein localises to the secreted. Can mediate activation of c-Jun and NF-kappa-B. May promote caspase-independent cell death. Isoform 2 and isoform 3 may act as decoy receptors. In Mus musculus (Mouse), this protein is Tumor necrosis factor receptor superfamily member 19 (Tnfrsf19).